Here is a 530-residue protein sequence, read N- to C-terminus: T-complex protein 1 subunit zeta (530 aa).

Residue Gly38 coordinates ADP. Residue Gly38 participates in ATP binding. Asp89 contacts Mg(2+). Positions 90, 91, 92, 93, 157, 158, and 410 each coordinate ADP. Gly90, Thr91, and Thr92 together coordinate ATP. ATP contacts are provided by Ala410, Gly411, Asp495, and Lys500. Asp495 contacts ADP.

As to quaternary structure, component of the chaperonin-containing T-complex (TRiC), a hexadecamer composed of two identical back-to-back stacked rings enclosing a protein folding chamber. Each ring is made up of eight different subunits: TCP1/CCT1, CCT2, CCT3, CCT4, CCT5, CCT6A/CCT6, CCT7, CCT8. Interacts with PACRG.

Its subcellular location is the cytoplasm. It catalyses the reaction ATP + H2O = ADP + phosphate + H(+). Component of the chaperonin-containing T-complex (TRiC), a molecular chaperone complex that assists the folding of actin, tubulin and other proteins upon ATP hydrolysis. The chain is T-complex protein 1 subunit zeta from Gallus gallus (Chicken).